A 368-amino-acid chain; its full sequence is Alanine racemase (368 aa).

The active-site Proton acceptor; specific for D-alanine is Lys-40. Lys-40 is subject to N6-(pyridoxal phosphate)lysine. Arg-134 is a substrate binding site. Tyr-263 functions as the Proton acceptor; specific for L-alanine in the catalytic mechanism. Residue Met-310 participates in substrate binding.

Belongs to the alanine racemase family. The cofactor is pyridoxal 5'-phosphate.

It carries out the reaction L-alanine = D-alanine. It participates in amino-acid biosynthesis; D-alanine biosynthesis; D-alanine from L-alanine: step 1/1. Its function is as follows. Catalyzes the interconversion of L-alanine and D-alanine. May also act on other amino acids. This Listeria monocytogenes serotype 4b (strain CLIP80459) protein is Alanine racemase (alr).